Here is an 880-residue protein sequence, read N- to C-terminus: Alanine--tRNA ligase (880 aa).

This sequence belongs to the class-II aminoacyl-tRNA synthetase family.

It is found in the cytoplasm. It carries out the reaction tRNA(Ala) + L-alanine + ATP = L-alanyl-tRNA(Ala) + AMP + diphosphate. In terms of biological role, catalyzes the attachment of alanine to tRNA(Ala) in a two-step reaction: alanine is first activated by ATP to form Ala-AMP and then transferred to the acceptor end of tRNA(Ala). Also edits incorrectly charged Ser-tRNA(Ala) and Gly-tRNA(Ala) via its editing domain. The chain is Alanine--tRNA ligase (alaS) from Lactiplantibacillus plantarum (strain ATCC BAA-793 / NCIMB 8826 / WCFS1) (Lactobacillus plantarum).